We begin with the raw amino-acid sequence, 95 residues long: Small ribosomal subunit protein bS18 (95 aa).

Belongs to the bacterial ribosomal protein bS18 family. In terms of assembly, part of the 30S ribosomal subunit. Forms a tight heterodimer with protein bS6.

Functionally, binds as a heterodimer with protein bS6 to the central domain of the 16S rRNA, where it helps stabilize the platform of the 30S subunit. The sequence is that of Small ribosomal subunit protein bS18 from Rickettsia massiliae (strain Mtu5).